A 382-amino-acid chain; its full sequence is Transforming growth factor beta-1 proprotein (382 aa).

The N-terminal stretch at 1–21 (MEVLWMLLVLLVLHLSSLAMS) is a signal peptide. The straightjacket domain stretch occupies residues 22-65 (LSTCKAVDMEEVRKRRIEAIRGQILSKLKLDKTPDVDSEKMTVP). The tract at residues 66 to 263 (SEAIFLYNST…SMPAERIDTV (198 aa)) is arm domain. N-linked (GlcNAc...) asparagine glycans are attached at residues N73, N123, and N166. The interval 218-242 (PTPQAKDIDIEGFPALRGDLASLSS) is bowtie tail. Residues 234–236 (RGD) carry the Cell attachment site motif. 4 cysteine pairs are disulfide-bonded: C277–C286, C285–C348, C314–C379, and C318–C381.

Belongs to the TGF-beta family. In terms of assembly, latency-associated peptide: Homodimer; disulfide-linked. Latency-associated peptide: Interacts with Transforming growth factor beta-1 (TGF-beta-1) chain; interaction is non-covalent and maintains (TGF-beta-1) in a latent state; each Latency-associated peptide (LAP) monomer interacts with TGF-beta-1 in the other monomer. Transforming growth factor beta-1: Homodimer; disulfide-linked. Transforming growth factor beta-1: Interacts with TGF-beta receptors (tgfbr1 and tgfbr2), leading to signal transduction. Transforming growth factor beta-1 proprotein: The precursor proprotein is cleaved in the Golgi apparatus to form Transforming growth factor beta-1 (TGF-beta-1) and Latency-associated peptide (LAP) chains, which remain non-covalently linked, rendering TGF-beta-1 inactive.

The protein localises to the secreted. The protein resides in the extracellular space. It localises to the extracellular matrix. Functionally, transforming growth factor beta-1 proprotein: Precursor of the Latency-associated peptide (LAP) and Transforming growth factor beta-1 (TGF-beta-1) chains, which constitute the regulatory and active subunit of TGF-beta-1, respectively. Its function is as follows. Required to maintain the Transforming growth factor beta-1 (TGF-beta-1) chain in a latent state during storage in extracellular matrix. Associates non-covalently with TGF-beta-1 and regulates its activation via interaction with 'milieu molecules', such as LTBP1, LRRC32/GARP and LRRC33/NRROS, that control activation of TGF-beta-1. Interaction with integrins (ITGAV:ITGB6 or ITGAV:ITGB8) results in distortion of the Latency-associated peptide chain and subsequent release of the active TGF-beta-1. Transforming growth factor beta-1: Multifunctional protein that regulates the growth and differentiation of various cell types and is involved in various processes, such as normal development, immune function, microglia function and responses to neurodegeneration. Activation into mature form follows different steps: following cleavage of the proprotein in the Golgi apparatus, Latency-associated peptide (LAP) and Transforming growth factor beta-1 (TGF-beta-1) chains remain non-covalently linked rendering TGF-beta-1 inactive during storage in extracellular matrix. At the same time, LAP chain interacts with 'milieu molecules', such as ltbp1, lrrc32/garp and lrrc33/nrros that control activation of TGF-beta-1 and maintain it in a latent state during storage in extracellular milieus. TGF-beta-1 is released from LAP by integrins (ITGAV:ITGB6 or ITGAV:ITGB8): integrin-binding to LAP stabilizes an alternative conformation of the LAP bowtie tail and results in distortion of the LAP chain and subsequent release of the active TGF-beta-1. Once activated following release of LAP, TGF-beta-1 acts by binding to TGF-beta receptors (tgfbr1 and tgfbr2), which transduce signal. While expressed by many cells types, TGF-beta-1 only has a very localized range of action within cell environment thanks to fine regulation of its activation by Latency-associated peptide chain (LAP) and 'milieu molecules'. Plays an important role in bone remodeling: acts as a potent stimulator of osteoblastic bone formation. Can promote either T-helper 17 cells (Th17) or regulatory T-cells (Treg) lineage differentiation in a concentration-dependent manner. Can induce epithelial-to-mesenchymal transition (EMT) and cell migration in various cell types. In Xenopus laevis (African clawed frog), this protein is Transforming growth factor beta-1 proprotein (tgfb1).